A 582-amino-acid polypeptide reads, in one-letter code: 15-cis-phytoene desaturase, chloroplastic/chromoplastic (582 aa).

The transit peptide at 1-110 (MPQIGLVSAV…FRSSPRPTKP (110 aa)) directs the protein to the chloroplast and chromoplast. FAD-binding positions include 140-141 (EA), K148, 165-166 (HI), and Y171. Position 306 (R306) interacts with substrate. FAD is bound by residues I348 and D537. A545 is a substrate binding site. Residue M547 participates in FAD binding.

Belongs to the carotenoid/retinoid oxidoreductase family. Homotetramer. FAD serves as cofactor.

It localises to the plastid. It is found in the chloroplast. The protein resides in the chromoplast. The protein localises to the membrane. The catalysed reaction is 2 a plastoquinone + 15-cis-phytoene = 9,9',15-tri-cis-zeta-carotene + 2 a plastoquinol. It participates in carotenoid biosynthesis; lycopene biosynthesis. Inhibited by the herbicides metflurazon, difunone, fluridone and diflufenican. Functionally, converts phytoene into zeta-carotene via the intermediary of phytofluene by the symmetrical introduction of two double bonds at the C-11 and C-11' positions of phytoene with a concomitant isomerization of two neighboring double bonds at the C9 and C9' positions from trans to cis. This Capsicum annuum (Capsicum pepper) protein is 15-cis-phytoene desaturase, chloroplastic/chromoplastic (PDS).